Consider the following 192-residue polypeptide: Crossover junction endodeoxyribonuclease RuvC (192 aa).

Catalysis depends on residues D20, E80, and D153. Mg(2+) contacts are provided by D20, E80, and D153.

It belongs to the RuvC family. In terms of assembly, homodimer which binds Holliday junction (HJ) DNA. The HJ becomes 2-fold symmetrical on binding to RuvC with unstacked arms; it has a different conformation from HJ DNA in complex with RuvA. In the full resolvosome a probable DNA-RuvA(4)-RuvB(12)-RuvC(2) complex forms which resolves the HJ. It depends on Mg(2+) as a cofactor.

The protein resides in the cytoplasm. It carries out the reaction Endonucleolytic cleavage at a junction such as a reciprocal single-stranded crossover between two homologous DNA duplexes (Holliday junction).. In terms of biological role, the RuvA-RuvB-RuvC complex processes Holliday junction (HJ) DNA during genetic recombination and DNA repair. Endonuclease that resolves HJ intermediates. Cleaves cruciform DNA by making single-stranded nicks across the HJ at symmetrical positions within the homologous arms, yielding a 5'-phosphate and a 3'-hydroxyl group; requires a central core of homology in the junction. The consensus cleavage sequence is 5'-(A/T)TT(C/G)-3'. Cleavage occurs on the 3'-side of the TT dinucleotide at the point of strand exchange. HJ branch migration catalyzed by RuvA-RuvB allows RuvC to scan DNA until it finds its consensus sequence, where it cleaves and resolves the cruciform DNA. This Christiangramia forsetii (strain DSM 17595 / CGMCC 1.15422 / KT0803) (Gramella forsetii) protein is Crossover junction endodeoxyribonuclease RuvC.